Here is a 72-residue protein sequence, read N- to C-terminus: Large ribosomal subunit protein uL29 (72 aa).

This sequence belongs to the universal ribosomal protein uL29 family.

This Prochlorococcus marinus (strain MIT 9215) protein is Large ribosomal subunit protein uL29.